The chain runs to 327 residues: Immediate early response gene 5 protein (327 aa).

Disordered stretches follow at residues 59–166 (GPAG…GVFP) and 227–313 (GPAG…DKPV). Low complexity predominate over residues 71–84 (QPGEPAAGPPAGWG). Acidic residues predominate over residues 253–262 (GEDDDAEEME). The span at 265-278 (NVANLISIFGSSFS) shows a compositional bias: polar residues.

The protein belongs to the IER family. Monomer. Homodimer. Associates with the catalytic subunit of protein phosphatase PP2A. Interacts (via N- and C-terminal regions) with PPP2R2B. Interacts with PPP2R2A, PPP2R2C and PPP2R2D. Interacts (via N-terminus) with RPS6KB1. Interacts (via central region) with HSF1; this interaction promotes PPP2CA-induced HSF1 dephosphorylation, leading to enhanced HSF1 transcriptional activity. Expressed in acute myeloid leukemia (AML) cells.

It is found in the nucleus. The protein resides in the cytoplasm. Its function is as follows. Plays a role as a transcription factor. Mediates positive transcriptional regulation of several chaperone genes during the heat shock response in a HSF1-dependent manner. Mediates negative transcriptional regulation of CDC25B expression. Plays a role in the dephosphorylation of the heat shock factor HSF1 and ribosomal protein S6 kinase (S6K) by the protein phosphatase PP2A. Involved in the regulation of cell proliferation and resistance to thermal stress. Involved in the cell cycle checkpoint and survival in response to ionizing radiation. Associates with chromatin to the CDC25B promoter. This is Immediate early response gene 5 protein (IER5) from Homo sapiens (Human).